We begin with the raw amino-acid sequence, 539 residues long: Phosphoenolpyruvate carboxykinase (ATP) (539 aa).

Arginine 64, tyrosine 206, and lysine 212 together coordinate substrate. ATP is bound by residues lysine 212, histidine 231, and 247 to 255; that span reads GLSGTGKTT. Positions 212 and 231 each coordinate Mn(2+). Position 268 (aspartate 268) interacts with Mn(2+). ATP contacts are provided by residues glutamate 296, arginine 332, 448–449, and threonine 454; that span reads RI. Arginine 332 serves as a coordination point for substrate.

Belongs to the phosphoenolpyruvate carboxykinase (ATP) family. Monomer. Mn(2+) serves as cofactor.

The protein resides in the cytoplasm. It catalyses the reaction oxaloacetate + ATP = phosphoenolpyruvate + ADP + CO2. Its pathway is carbohydrate biosynthesis; gluconeogenesis. Its function is as follows. Involved in the gluconeogenesis. Catalyzes the conversion of oxaloacetate (OAA) to phosphoenolpyruvate (PEP) through direct phosphoryl transfer between the nucleoside triphosphate and OAA. The sequence is that of Phosphoenolpyruvate carboxykinase (ATP) from Sodalis glossinidius (strain morsitans).